We begin with the raw amino-acid sequence, 90 residues long: Heat shock protein beta-7 (90 aa).

The 52-residue stretch at P39 to P90 folds into the sHSP domain.

Belongs to the small heat shock protein (HSP20) family. Interacts with C-terminal domain of actin-binding protein 280. Found in both cardiac and skeletal muscle.

The protein localises to the cytoplasm. The protein resides in the nucleus. Its subcellular location is the cajal body. This Rattus norvegicus (Rat) protein is Heat shock protein beta-7 (Hspb7).